Reading from the N-terminus, the 450-residue chain is Tubulin alpha-3 chain (450 aa).

Gln11 is a GTP binding site. The residue at position 40 (Lys40) is an N6-acetyllysine. GTP is bound by residues Glu71, Ser140, Gly144, Thr145, Thr179, Asn206, and Asn228. Glu71 lines the Mg(2+) pocket. Residue Glu254 is part of the active site.

The protein belongs to the tubulin family. As to quaternary structure, dimer of alpha and beta chains. A typical microtubule is a hollow water-filled tube with an outer diameter of 25 nm and an inner diameter of 15 nM. Alpha-beta heterodimers associate head-to-tail to form protofilaments running lengthwise along the microtubule wall with the beta-tubulin subunit facing the microtubule plus end conferring a structural polarity. Microtubules usually have 13 protofilaments but different protofilament numbers can be found in some organisms and specialized cells. Mg(2+) is required as a cofactor. Post-translationally, undergoes a tyrosination/detyrosination cycle, the cyclic removal and re-addition of a C-terminal tyrosine residue by the enzymes tubulin tyrosine carboxypeptidase (TTCP) and tubulin tyrosine ligase (TTL), respectively. In terms of processing, acetylation of alpha chains at Lys-40 stabilizes microtubules and affects affinity and processivity of microtubule motors. This modification has a role in multiple cellular functions, ranging from cell motility, cell cycle progression or cell differentiation to intracellular trafficking and signaling. During the early stages of oogenesis lky/Alpha-tubulin N-acetyltransferase 2 is the main acetyltransferase responsible for Lys-40 acetylation in germline cells while Atat/alpha-tubulin N-acetyltransferase 1 is the main acetyltransferase responsible for Lys-40 acetylation in somatic cells.

The protein resides in the cytoplasm. It localises to the cytoskeleton. It carries out the reaction GTP + H2O = GDP + phosphate + H(+). Its function is as follows. Tubulin is the major constituent of microtubules, a cylinder consisting of laterally associated linear protofilaments composed of alpha- and beta-tubulin heterodimers. Microtubules grow by the addition of GTP-tubulin dimers to the microtubule end, where a stabilizing cap forms. Below the cap, tubulin dimers are in GDP-bound state, owing to GTPase activity of alpha-tubulin. This chain is Tubulin alpha-3 chain (alphaTub84D), found in Drosophila melanogaster (Fruit fly).